Reading from the N-terminus, the 61-residue chain is Photosystem II reaction center X protein (61 aa).

The helical transmembrane segment at 26–46 (IGSFIAAALLIVIPATAFLIF) threads the bilayer.

The protein belongs to the PsbX family. Type 2 subfamily. PSII consists of a core antenna complex that captures photons, and an electron transfer chain that converts photonic excitation into a charge separation. PSII forms dimeric complexes.

It localises to the cellular thylakoid membrane. Its function is as follows. Involved in the binding and/or turnover of quinones at the Q(B) site of Photosystem II. The polypeptide is Photosystem II reaction center X protein (Prochlorococcus marinus (strain MIT 9215)).